The primary structure comprises 483 residues: Protein nucleotidyltransferase YdiU (483 aa).

The ATP site is built by glycine 87, glycine 89, arginine 90, lysine 110, aspartate 122, glycine 123, arginine 173, and arginine 180. Aspartate 249 (proton acceptor) is an active-site residue. Mg(2+) contacts are provided by asparagine 250 and aspartate 259. Aspartate 259 contacts ATP.

Belongs to the SELO family. The cofactor is Mg(2+). Mn(2+) is required as a cofactor.

It carries out the reaction L-seryl-[protein] + ATP = 3-O-(5'-adenylyl)-L-seryl-[protein] + diphosphate. It catalyses the reaction L-threonyl-[protein] + ATP = 3-O-(5'-adenylyl)-L-threonyl-[protein] + diphosphate. The catalysed reaction is L-tyrosyl-[protein] + ATP = O-(5'-adenylyl)-L-tyrosyl-[protein] + diphosphate. The enzyme catalyses L-histidyl-[protein] + UTP = N(tele)-(5'-uridylyl)-L-histidyl-[protein] + diphosphate. It carries out the reaction L-seryl-[protein] + UTP = O-(5'-uridylyl)-L-seryl-[protein] + diphosphate. It catalyses the reaction L-tyrosyl-[protein] + UTP = O-(5'-uridylyl)-L-tyrosyl-[protein] + diphosphate. Nucleotidyltransferase involved in the post-translational modification of proteins. It can catalyze the addition of adenosine monophosphate (AMP) or uridine monophosphate (UMP) to a protein, resulting in modifications known as AMPylation and UMPylation. This Yersinia pseudotuberculosis serotype O:1b (strain IP 31758) protein is Protein nucleotidyltransferase YdiU.